The chain runs to 448 residues: Fibulin-5 (448 aa).

The N-terminal stretch at 1–23 is a signal peptide; the sequence is MPGLKRILTVTILALWLPHPGNA. In terms of domain architecture, EGF-like 1; calcium-binding spans 42-82; the sequence is DIDECRTIPEACRGDMMCVNQNGGYLCIPRTNPVYRGPYSN. Disulfide bonds link cysteine 46-cysteine 59, cysteine 53-cysteine 68, cysteine 131-cysteine 144, cysteine 138-cysteine 153, cysteine 155-cysteine 166, cysteine 172-cysteine 181, cysteine 177-cysteine 190, cysteine 192-cysteine 205, cysteine 211-cysteine 221, cysteine 217-cysteine 230, cysteine 232-cysteine 245, cysteine 251-cysteine 262, cysteine 258-cysteine 271, cysteine 273-cysteine 286, cysteine 292-cysteine 305, cysteine 299-cysteine 314, and cysteine 320-cysteine 332. The short motif at 54–56 is the Cell attachment site element; that stretch reads RGD. One can recognise an EGF-like 2; calcium-binding domain in the interval 127–167; it reads DVDECATDSHQCNPTQICINTEGGYTCSCTDGYWLLEGQCL. Residues 168-206 form the EGF-like 3; calcium-binding domain; that stretch reads DIDECRYGYCQQLCANVPGSYSCTCNPGFTLNDDGRSCQ. The EGF-like 4; calcium-binding domain maps to 207–246; it reads DVNECETENPCVQTCVNTYGSFICRCDPGYELEEDGIHCS. The segment at 245–448 is interaction with LOXL1; it reads CSDMDECSFS…LRIYVSQYPF (204 aa). The EGF-like 5; calcium-binding domain occupies 247–287; sequence DMDECSFSEFLCQHECVNQPGSYFCSCPPGYVLLEDNRSCQ. Asparagine 283 and asparagine 296 each carry an N-linked (GlcNAc...) asparagine glycan. Residues 288–333 enclose the EGF-like 6; calcium-binding domain; the sequence is DINECEHRNHTCTPLQTCYNLQGGFKCIDPIVCEEPYLLIGDNRCM.

Belongs to the fibulin family. In terms of assembly, homodimer. Monomer, homodimerizes in presence of Ca(2+). Interacts with ELN. Interacts (via N-terminus) with the integrins ITGAV/ITGB3, ITGAV/ITGB5 and ITGA9/ITGB1. Interacts with FBN1 (via N-terminal domain). Forms a ternary complex with ELN and FBN1. Interacts with EFEMP2 with moderate affinity. Interacts with LOXL1. Post-translationally, N-glycosylated.

Its subcellular location is the secreted. The protein localises to the extracellular space. It is found in the extracellular matrix. Its function is as follows. Essential for elastic fiber formation, is involved in the assembly of continuous elastin (ELN) polymer and promotes the interaction of microfibrils and ELN. Stabilizes and organizes elastic fibers in the skin, lung and vasculature. Promotes adhesion of endothelial cells through interaction of integrins and the RGD motif. Vascular ligand for integrin receptors which may play a role in vascular development and remodeling. May act as an adapter that mediates the interaction between FBN1 and ELN. This chain is Fibulin-5 (Fbln5), found in Rattus norvegicus (Rat).